The chain runs to 390 residues: Neutrophil cytosol factor 1 (390 aa).

Residues 4-125 (TFIRHIALLG…DFFKVRPDDL (122 aa)) enclose the PX domain. 2 consecutive SH3 domains span residues 156–215 (IILQ…PLDS) and 226–285 (YAGE…KAGE). The segment at 291–390 (QRQIRGRGAP…STKRKLTSAV (100 aa)) is disordered. Phosphoserine occurs at positions 304, 321, 329, and 346. The span at 374–383 (ILHRCTESTK) shows a compositional bias: basic and acidic residues.

Component of the phagocyte NADPH oxidase complex composed of an obligatory core heterodimer formed by the membrane proteins CYBA and CYBB and the cytosolic regulatory subunits NCF1/p47-phox, NCF2/p67-phox, NCF4/p40-phox and the small GTPase RAC1 or RAC2. Part of a cytosolic complex composed at least by NCF1, NCF2 and NCF4. Interacts (via C-terminus) with NCF2 (via the C-terminal SH3 domain). Interacts with NCF4. Interacts with CYBB. Interacts (via the second SH3 domain) with CYBA; interaction is phosphorylation-dependent. Interacts with NOXA1. Interacts with ADAM15. Interacts with TRAF4. Interacts with FASLG. Interacts with PARK7 (via C-terminus); the interaction is enhanced by LPS and modulates NCF1 phosphorylation and membrane translocation. In terms of processing, phosphorylated by PRKCD; phosphorylation induces activation of NCF1, leading to assembly and activation of the NADPH oxidase complex.

It localises to the cytoplasm. The protein localises to the cytosol. Its subcellular location is the membrane. In terms of biological role, subunit of the phagocyte NADPH oxidase complex that mediates the transfer of electrons from cytosolic NADPH to O2 to produce the superoxide anion (O2(-)). In the activated complex, electrons are first transferred from NADPH to flavin adenine dinucleotide (FAD) and subsequently transferred via two heme molecules to molecular oxygen, producing superoxide through an outer-sphere reaction. Activation of the NADPH oxidase complex is initiated by the assembly of cytosolic subunits of the NADPH oxidase complex with the core NADPH oxidase complex to form a complex at the plasma membrane or phagosomal membrane. This activation process is initiated by phosphorylation dependent binding of the cytosolic NCF1/p47-phox subunit to the C-terminus of CYBA/p22-phox. In Mus musculus (Mouse), this protein is Neutrophil cytosol factor 1.